We begin with the raw amino-acid sequence, 269 residues long: Hemin import ATP-binding protein HmuV (269 aa).

Residues 2–242 (LEVIHTGLNI…AMVEACFDLP (241 aa)) enclose the ABC transporter domain. 34 to 41 (GPNGAGKS) serves as a coordination point for ATP.

This sequence belongs to the ABC transporter superfamily. Heme (hemin) importer (TC 3.A.1.14.5) family. The complex is composed of two ATP-binding proteins (HmuV), two transmembrane proteins (HmuU) and a solute-binding protein (HmuT).

The protein resides in the cell inner membrane. Functionally, part of the ABC transporter complex HmuTUV involved in hemin import. Responsible for energy coupling to the transport system. The protein is Hemin import ATP-binding protein HmuV of Methylobacillus flagellatus (strain ATCC 51484 / DSM 6875 / VKM B-1610 / KT).